A 121-amino-acid chain; its full sequence is Small ribosomal subunit protein bS6 (121 aa).

Positions 99–121 are disordered; it reads PLPAPRVAPGTEAPAEPEAAAPA. Over residues 110–121 the composition is skewed to low complexity; it reads EAPAEPEAAAPA.

It belongs to the bacterial ribosomal protein bS6 family.

In terms of biological role, binds together with bS18 to 16S ribosomal RNA. In Synechococcus sp. (strain CC9311), this protein is Small ribosomal subunit protein bS6.